Reading from the N-terminus, the 130-residue chain is Nascent polypeptide-associated complex protein (130 aa).

One can recognise an NAC-A/B domain in the interval 8–75 (PKMMRQMQKM…AKNIKKDDIK (68 aa)).

The protein belongs to the NAC-alpha family. In terms of assembly, homodimer. Interacts with the ribosome. Binds ribosomal RNA.

Contacts the emerging nascent chain on the ribosome. The protein is Nascent polypeptide-associated complex protein of Methanococcus aeolicus (strain ATCC BAA-1280 / DSM 17508 / OCM 812 / Nankai-3).